The following is an 865-amino-acid chain: Leucine--tRNA ligase (865 aa).

A 'HIGH' region motif is present at residues Pro-41 to His-51. The 'KMSKS' region motif lies at Lys-614 to Ser-618. Lys-617 provides a ligand contact to ATP.

The protein belongs to the class-I aminoacyl-tRNA synthetase family.

Its subcellular location is the cytoplasm. The catalysed reaction is tRNA(Leu) + L-leucine + ATP = L-leucyl-tRNA(Leu) + AMP + diphosphate. This chain is Leucine--tRNA ligase, found in Rhodospirillum centenum (strain ATCC 51521 / SW).